We begin with the raw amino-acid sequence, 322 residues long: Replication factor C small subunit 2 (322 aa).

44-51 is an ATP binding site; it reads GPPGTGKT.

This sequence belongs to the activator 1 small subunits family. RfcS subfamily. As to quaternary structure, heteromultimer composed of small subunits (RfcS) and large subunits (RfcL).

Functionally, part of the RFC clamp loader complex which loads the PCNA sliding clamp onto DNA. The chain is Replication factor C small subunit 2 from Pyrobaculum arsenaticum (strain DSM 13514 / JCM 11321 / PZ6).